The chain runs to 256 residues: Type III pantothenate kinase (256 aa).

Residue 6 to 13 (DAGNSRIK) participates in ATP binding. Substrate contacts are provided by residues tyrosine 90 and 97 to 100 (GSDR). Residue aspartate 99 is the Proton acceptor of the active site. Residue threonine 123 participates in ATP binding. Threonine 187 is a substrate binding site.

The protein belongs to the type III pantothenate kinase family. As to quaternary structure, homodimer. It depends on NH4(+) as a cofactor. The cofactor is K(+).

Its subcellular location is the cytoplasm. The catalysed reaction is (R)-pantothenate + ATP = (R)-4'-phosphopantothenate + ADP + H(+). Its pathway is cofactor biosynthesis; coenzyme A biosynthesis; CoA from (R)-pantothenate: step 1/5. In terms of biological role, catalyzes the phosphorylation of pantothenate (Pan), the first step in CoA biosynthesis. This chain is Type III pantothenate kinase, found in Burkholderia mallei (strain ATCC 23344).